Consider the following 134-residue polypeptide: Small ribosomal subunit protein bS16 (134 aa).

The interval 80 to 134 (GLAKRPTRSNPTKGEPGKKAQERLAMAKQAEEEAAAKAAEAAAAAAAPAEEAASE) is disordered. The segment covering 115–134 (AKAAEAAAAAAAPAEEAASE) has biased composition (low complexity).

Belongs to the bacterial ribosomal protein bS16 family.

In Brucella anthropi (strain ATCC 49188 / DSM 6882 / CCUG 24695 / JCM 21032 / LMG 3331 / NBRC 15819 / NCTC 12168 / Alc 37) (Ochrobactrum anthropi), this protein is Small ribosomal subunit protein bS16.